The chain runs to 500 residues: MLNVNFTNGELLNTQGLVVFIDEQLKLDSNLITLDQQHHGLISKTIADKLQFTGKYGQIKVIPSVIKSGEIKYLIIAGLGTEEKLTEAKVEELGGKILQYATSAKISTISLKIINRISRFTSQTFASLVASGAFLASYRFDKYRTNLKEAEKFAVESIEVFTDNNTEAAKLFEVKKLVAEAVFFTRDISNEPSNIKTPQVYAERIVDILEPLGVDVDIIGEREMKNLGMGALLGVGQGSQNESKLVVMEYKGGSKYPTIALVGKGVIFDTGGISLKPSSNMHLMRYDMGGSAAVVGSMIAVAGQKLPVNIVGVVGLVENMLSGNAQRPGDVVTTMSGQTVEVLNTDAEGRLVLADAVWYAQEKFKPKCLIDVATLTGAITVALGSTYAGCFSNNDELASKLIKAGEEVNEKLWRMPLHDEYDAMIGSDIADMANISNIPRAAGSCIAAHFIKRFIKDGVDWAHLDIAGVANSNKVSSLGPKGAVGYGVRLLEKFIKEYNR.

Residues K264 and D269 each contribute to the Mn(2+) site. K276 is an active-site residue. Mn(2+)-binding residues include D287, D346, and E348. R350 is a catalytic residue.

Belongs to the peptidase M17 family. Requires Mn(2+) as cofactor.

Its subcellular location is the cytoplasm. It carries out the reaction Release of an N-terminal amino acid, Xaa-|-Yaa-, in which Xaa is preferably Leu, but may be other amino acids including Pro although not Arg or Lys, and Yaa may be Pro. Amino acid amides and methyl esters are also readily hydrolyzed, but rates on arylamides are exceedingly low.. The catalysed reaction is Release of an N-terminal amino acid, preferentially leucine, but not glutamic or aspartic acids.. Presumably involved in the processing and regular turnover of intracellular proteins. Catalyzes the removal of unsubstituted N-terminal amino acids from various peptides. The chain is Probable cytosol aminopeptidase from Rickettsia canadensis (strain McKiel).